The following is a 223-amino-acid chain: Probable transaldolase (223 aa).

The active-site Schiff-base intermediate with substrate is the K86.

Belongs to the transaldolase family. Type 3B subfamily.

The protein localises to the cytoplasm. The enzyme catalyses D-sedoheptulose 7-phosphate + D-glyceraldehyde 3-phosphate = D-erythrose 4-phosphate + beta-D-fructose 6-phosphate. Its pathway is carbohydrate degradation; pentose phosphate pathway; D-glyceraldehyde 3-phosphate and beta-D-fructose 6-phosphate from D-ribose 5-phosphate and D-xylulose 5-phosphate (non-oxidative stage): step 2/3. Transaldolase is important for the balance of metabolites in the pentose-phosphate pathway. The chain is Probable transaldolase (tal) from Thermoplasma acidophilum (strain ATCC 25905 / DSM 1728 / JCM 9062 / NBRC 15155 / AMRC-C165).